A 399-amino-acid chain; its full sequence is Acetate kinase (399 aa).

Asparagine 10 contributes to the Mg(2+) binding site. Lysine 17 is a binding site for ATP. Position 91 (arginine 91) interacts with substrate. Aspartate 148 serves as the catalytic Proton donor/acceptor. ATP is bound by residues 208 to 212 (HLGNG), 283 to 285 (DCR), and 331 to 335 (GIGEN). Position 385 (glutamate 385) interacts with Mg(2+).

This sequence belongs to the acetokinase family. In terms of assembly, homodimer. The cofactor is Mg(2+). It depends on Mn(2+) as a cofactor.

It is found in the cytoplasm. It carries out the reaction acetate + ATP = acetyl phosphate + ADP. The protein operates within metabolic intermediate biosynthesis; acetyl-CoA biosynthesis; acetyl-CoA from acetate: step 1/2. In terms of biological role, catalyzes the formation of acetyl phosphate from acetate and ATP. Can also catalyze the reverse reaction. The sequence is that of Acetate kinase from Shewanella sp. (strain ANA-3).